The chain runs to 122 residues: MARIAGVDLPRDKRVEIALTYIYGIGRSRSKEILAKAGVNPDTRVRDLTEDEVSKLREIIEKEYKVEGDLRKEVAMNIKRLIDIGCYRGIRHKLGLPVRGQRTRTNARTRKGPRKTVAKKKK.

A disordered region spans residues Pro97 to Lys122. Residues Gln101–Lys122 are compositionally biased toward basic residues.

This sequence belongs to the universal ribosomal protein uS13 family. In terms of assembly, part of the 30S ribosomal subunit. Forms a loose heterodimer with protein S19. Forms two bridges to the 50S subunit in the 70S ribosome.

Located at the top of the head of the 30S subunit, it contacts several helices of the 16S rRNA. In the 70S ribosome it contacts the 23S rRNA (bridge B1a) and protein L5 of the 50S subunit (bridge B1b), connecting the 2 subunits; these bridges are implicated in subunit movement. Contacts the tRNAs in the A and P-sites. The chain is Small ribosomal subunit protein uS13 from Caldanaerobacter subterraneus subsp. tengcongensis (strain DSM 15242 / JCM 11007 / NBRC 100824 / MB4) (Thermoanaerobacter tengcongensis).